Here is a 421-residue protein sequence, read N- to C-terminus: NAD-specific glutamate dehydrogenase (421 aa).

Lysine 70 and lysine 94 together coordinate substrate. Lysine 106 serves as the catalytic Proton donor. The NAD(+) site is built by threonine 191 and asparagine 222. A substrate-binding site is contributed by serine 355.

This sequence belongs to the Glu/Leu/Phe/Val dehydrogenases family. In terms of assembly, homohexamer.

The catalysed reaction is L-glutamate + NAD(+) + H2O = 2-oxoglutarate + NH4(+) + NADH + H(+). It participates in amino-acid degradation; L-glutamate degradation via hydroxyglutarate pathway; crotonoyl-CoA from L-glutamate: step 1/5. This Peptoniphilus asaccharolyticus (Peptostreptococcus asaccharolyticus) protein is NAD-specific glutamate dehydrogenase.